Reading from the N-terminus, the 156-residue chain is Transcription antitermination protein NusB (156 aa).

The protein belongs to the NusB family.

Functionally, involved in transcription antitermination. Required for transcription of ribosomal RNA (rRNA) genes. Binds specifically to the boxA antiterminator sequence of the ribosomal RNA (rrn) operons. This Rickettsia africae (strain ESF-5) protein is Transcription antitermination protein NusB.